Consider the following 126-residue polypeptide: uncharacterized protein (126 aa).

At 1 to 9 (MCTYIITQS) the chain is on the extracellular side. The chain crosses the membrane as a helical span at residues 10-30 (FFFLPCLSFLFFKLVGFFDSV). At 31–73 (FTAGKSLRIMFELPIFDKLTSCFAAIDCSATSLDIPFAEEELF) the chain is on the cytoplasmic side. A helical transmembrane segment spans residues 74–94 (LMLVSEPVLIPFLFVFEFMLI). Residues 95–126 (CKPCGSRSRFGFPVKNVSDFEETLEFDPTLLV) lie on the Extracellular side of the membrane.

The protein localises to the membrane. This is an uncharacterized protein from Saccharomyces cerevisiae (strain ATCC 204508 / S288c) (Baker's yeast).